A 359-amino-acid chain; its full sequence is Transcription factor MafA (359 aa).

Position 14 is a phosphoserine (Ser14). Residue Lys32 forms a Glycyl lysine isopeptide (Lys-Gly) (interchain with G-Cter in SUMO2) linkage. Disordered regions lie at residues 40-105 and 172-226; these read RFCH…VGGA and GGGA…AGHH. The segment covering 46–73 has biased composition (low complexity); sequence PPGSLSSTPLSTPCSSVPSSPSFCAPSP. The residue at position 49 (Ser49) is a Phosphoserine. A phosphothreonine mark is found at Thr53 and Thr57. Phosphoserine occurs at positions 61 and 65. Positions 74-84 are enriched in gly residues; it reads GTGGGAGGGGS. Positions 181–209 are enriched in basic residues; it reads GHHHGAHHTAHHHHSAHHHHHHHHHHGGS. Residues 210–224 show a composition bias toward gly residues; it reads GHHGGGAGHGGGGAG. Positions 260–285 are basic motif; it reads RLKQKRRTLKNRGYAQSCRFKRVQQR. In terms of domain architecture, bZIP spans 260-323; the sequence is RLKQKRRTLK…DLYKEKYEKL (64 aa). The interval 288 to 309 is leucine-zipper; the sequence is LESEKCQLQSQVEQLKLEVGRL. A disordered region spans residues 322–359; that stretch reads KLAGRGGPGGAGGAGFPREPSPAQAGPGAAKGAPDFFL. The span at 325 to 336 shows a compositional bias: gly residues; that stretch reads GRGGPGGAGGAG. The span at 343–359 shows a compositional bias: low complexity; sequence PAQAGPGAAKGAPDFFL.

This sequence belongs to the bZIP family. Maf subfamily. Forms homodimers. Interacts with NEUROD1 and PDX1. May interact with MAFB, FOS, JUN and PCAF. Post-translationally, ubiquitinated, leading to its degradation by the proteasome. In terms of processing, phosphorylated at tyrosines. In terms of tissue distribution, expressed in brain, lung, spleen, pancreas and kidney. In the pancreas, expressed in the insulin-producing beta-cells of the islets of Langerhans (at protein level). Also expressed in the eye.

The protein resides in the nucleus. In terms of biological role, transcriptional factor that activates insulin gene expression. Acts synergistically with NEUROD1/BETA2 and PDX1. Binds the insulin enhancer C1/RIPE3b element. Binds to consensus TRE-type MARE 5'-TGCTGACTCAGCA-3' DNA sequence. This Mus musculus (Mouse) protein is Transcription factor MafA (Mafa).